The following is a 211-amino-acid chain: tRNA (guanine-N(7)-)-methyltransferase (211 aa).

S-adenosyl-L-methionine contacts are provided by E43, D68, and N117. Substrate is bound by residues K121, D153, and 190–193 (TEYE).

The protein belongs to the class I-like SAM-binding methyltransferase superfamily. TrmB family.

It catalyses the reaction guanosine(46) in tRNA + S-adenosyl-L-methionine = N(7)-methylguanosine(46) in tRNA + S-adenosyl-L-homocysteine. It functions in the pathway tRNA modification; N(7)-methylguanine-tRNA biosynthesis. Its function is as follows. Catalyzes the formation of N(7)-methylguanine at position 46 (m7G46) in tRNA. This chain is tRNA (guanine-N(7)-)-methyltransferase, found in Clostridium acetobutylicum (strain ATCC 824 / DSM 792 / JCM 1419 / IAM 19013 / LMG 5710 / NBRC 13948 / NRRL B-527 / VKM B-1787 / 2291 / W).